The primary structure comprises 419 residues: Capsule polysaccharide modification protein LipB (419 aa).

It localises to the cell inner membrane. In terms of biological role, involved in the phospholipid modification of the capsular polysaccharide, a strong requirement for its translocation to the cell surface. In Neisseria meningitidis serogroup A / serotype 4A (strain DSM 15465 / Z2491), this protein is Capsule polysaccharide modification protein LipB (lipB).